The following is a 1027-amino-acid chain: Scavenger receptor cysteine-rich domain-containing protein SCART1 (1027 aa).

The N-terminal stretch at 1-19 (MRAALWTLGLGPLLLNLWA) is a signal peptide. At 20–906 (VPIGGPGALR…APFRTFWVVS (887 aa)) the chain is on the extracellular side. The region spanning 28–128 (LRLAYRHSTC…HAWVVVALCS (101 aa)) is the SRCR 1 domain. Disulfide bonds link Cys-53/Cys-117, Cys-66/Cys-127, and Cys-97/Cys-107. An N-linked (GlcNAc...) asparagine glycan is attached at Asn-94. Asn-129 is a glycosylation site (N-linked (GlcNAc...) asparagine). 7 SRCR domains span residues 135 to 227 (LRLV…VVCS), 232 to 326 (ARLV…LRCS), 328 to 428 (FRMV…AVCS), 434 to 534 (LRLR…VVCS), 555 to 656 (LSLH…VFCS), 661 to 761 (LRLR…AGLS), and 786 to 886 (LRVR…VRCW). 6 cysteine pairs are disulfide-bonded: Cys-160/Cys-216, Cys-171/Cys-226, Cys-196/Cys-206, Cys-253/Cys-315, Cys-266/Cys-325, and Cys-297/Cys-307. Residue Asn-332 is glycosylated (N-linked (GlcNAc...) asparagine). Cystine bridges form between Cys-353-Cys-417, Cys-366-Cys-427, Cys-397-Cys-407, Cys-472-Cys-533, Cys-503-Cys-513, Cys-594-Cys-655, and Cys-625-Cys-635. 2 disulfide bridges follow: Cys-824–Cys-885 and Cys-855–Cys-865. The chain crosses the membrane as a helical span at residues 907-927 (VVLGSLLGLLLLGLMAFLILP). Residues 928-1027 (RVTQAMQRGL…AAFPLEEMTL (100 aa)) lie on the Cytoplasmic side of the membrane.

Mainly expressed by CD4(+) and CD8(+) T lymphocytes. Also highly expressed in small intestine and colon. Expressed (at protein level) in small intestine, stomach, gall bladder, and placental villi.

It is found in the membrane. Functionally, may play a role in the immune system, perhaps as a co-receptor on alphabeta and gammadelta T-cells. The chain is Scavenger receptor cysteine-rich domain-containing protein SCART1 from Homo sapiens (Human).